We begin with the raw amino-acid sequence, 438 residues long: Trigger factor (438 aa).

In terms of domain architecture, PPIase FKBP-type spans 160–245; it reads DDKVTIDFVG…VKKIQQAELP (86 aa).

Belongs to the FKBP-type PPIase family. Tig subfamily.

The protein localises to the cytoplasm. The enzyme catalyses [protein]-peptidylproline (omega=180) = [protein]-peptidylproline (omega=0). Involved in protein export. Acts as a chaperone by maintaining the newly synthesized protein in an open conformation. Functions as a peptidyl-prolyl cis-trans isomerase. The sequence is that of Trigger factor from Francisella tularensis subsp. tularensis (strain FSC 198).